We begin with the raw amino-acid sequence, 237 residues long: Orotidine 5'-phosphate decarboxylase (237 aa).

Substrate-binding positions include Asp10, Lys33, 60–69 (DLKLHDIPNT), Thr123, Arg185, Gln194, Gly214, and Arg215. Lys62 functions as the Proton donor in the catalytic mechanism.

It belongs to the OMP decarboxylase family. Type 1 subfamily. Homodimer.

It catalyses the reaction orotidine 5'-phosphate + H(+) = UMP + CO2. The protein operates within pyrimidine metabolism; UMP biosynthesis via de novo pathway; UMP from orotate: step 2/2. In terms of biological role, catalyzes the decarboxylation of orotidine 5'-monophosphate (OMP) to uridine 5'-monophosphate (UMP). This chain is Orotidine 5'-phosphate decarboxylase, found in Enterococcus faecalis (strain ATCC 700802 / V583).